Reading from the N-terminus, the 541-residue chain is Cytochrome P450 monooxygenase claU (541 aa).

Residues 12–32 traverse the membrane as a helical segment; that stretch reads VIDTLVILFSTWAFLGLIRVI. Heme is bound at residue cysteine 480.

The protein belongs to the cytochrome P450 family. Heme serves as cofactor.

It localises to the membrane. The protein operates within secondary metabolite biosynthesis; terpenoid biosynthesis. Its function is as follows. Cytochrome P450 monooxygenase; part of the gene cluster that mediates the biosynthesis of clavilactone A, a meroterpenoid that features a unique benzo-fused ten-membered carbocyclic ring unit with an alpha,beta-epoxy-gamma-lactone moiety, forming an intriguing 10/5/3 tricyclic nested skeleton. Cytochrome P450 monooxygenases claO, claP, claQ, claU, and claW are close orthologs, suggesting that a redundant function or pseudogenes are present in the cla cluster. These monoxygenases are not involved in clavilactone A biosynthesis nor its modification. ClaR, ClaS and ClaT are sufficient to produce clavilactone A. The biosynthesis begins with the prenyltransferase claS that transfers geranyl pyrophosphate (GPP) to hydroquinone to produces geranylhydroquinone. The cytochrome P450 monooxygenase claR then catalyzes the diradical coupling reaction between the intramolecular hydroquinone and allyl moieties to form the benzo-fused ten-membered carbocyclic ring unit of wigantol. Finally the cytochrome P450 monooxygenase claT exquisitely and stereoselectively assembles the alpha,beta-epoxy-gamma-lactone moiety, producing clavilactone A via arnebinol A. The protein is Cytochrome P450 monooxygenase claU of Ampulloclitocybe clavipes (Club foot).